A 165-amino-acid chain; its full sequence is Transcriptional regulator MraZ (165 aa).

SpoVT-AbrB domains are found at residues 5–51 (TYEG…GEEL) and 80–123 (SAEL…NPER).

Belongs to the MraZ family. In terms of assembly, forms oligomers.

It localises to the cytoplasm. It is found in the nucleoid. The polypeptide is Transcriptional regulator MraZ (Hyphomonas neptunium (strain ATCC 15444)).